Here is a 101-residue protein sequence, read N- to C-terminus: MLKKNDSVVILSGKDKGKKGEIKEVIASKNRVIVSGVNIVSKHEKPAGNKKGGIIKVEAPLHISNVAIVCKKCNKAMTPKHTVANDGAKVRVCRKCGETVK.

This sequence belongs to the universal ribosomal protein uL24 family. Part of the 50S ribosomal subunit.

One of two assembly initiator proteins, it binds directly to the 5'-end of the 23S rRNA, where it nucleates assembly of the 50S subunit. Functionally, one of the proteins that surrounds the polypeptide exit tunnel on the outside of the subunit. This chain is Large ribosomal subunit protein uL24, found in Elusimicrobium minutum (strain Pei191).